We begin with the raw amino-acid sequence, 23 residues long: TWEECCKNPGCRNNHVDRCRGQV.

Cystine bridges form between C5–C11 and C6–C19. Residues 7-9 are lacks the Ser-Xaa-Pro motif that is crucial for potent interaction with nAChR; that stretch reads KNP.

As to expression, expressed by venom duct.

The protein resides in the secreted. Alpha-conotoxins act on postsynaptic membranes, they bind to the nicotinic acetylcholine receptors (nAChR) and thus inhibit them. Is a specific blocker of the alpha-3-beta-4/CHRNA3-CHRNB4 image nAChR and may also block alpha-3-beta-4-alpha-5 (CHRNA3-CHRNB4-CHRNA5) channels. Has possibly a distinct nAChR binding mode from other alpha-conotoxins, due to a different three residue motif (lacks the Ser-Xaa-Pro motif). In vivo, causes hyperactivity and behavioral disorders in mice following intracranial injection. This chain is Alpha-conotoxin-like RgIB, found in Conus regius (Crown cone).